Here is a 304-residue protein sequence, read N- to C-terminus: UDP-3-O-acyl-N-acetylglucosamine deacetylase (304 aa).

Residues His-78, His-237, and Asp-241 each contribute to the Zn(2+) site. Residue His-264 is the Proton donor of the active site.

Belongs to the LpxC family. It depends on Zn(2+) as a cofactor.

It carries out the reaction a UDP-3-O-[(3R)-3-hydroxyacyl]-N-acetyl-alpha-D-glucosamine + H2O = a UDP-3-O-[(3R)-3-hydroxyacyl]-alpha-D-glucosamine + acetate. It functions in the pathway glycolipid biosynthesis; lipid IV(A) biosynthesis; lipid IV(A) from (3R)-3-hydroxytetradecanoyl-[acyl-carrier-protein] and UDP-N-acetyl-alpha-D-glucosamine: step 2/6. Catalyzes the hydrolysis of UDP-3-O-myristoyl-N-acetylglucosamine to form UDP-3-O-myristoylglucosamine and acetate, the committed step in lipid A biosynthesis. This is UDP-3-O-acyl-N-acetylglucosamine deacetylase from Polynucleobacter necessarius subsp. necessarius (strain STIR1).